A 607-amino-acid chain; its full sequence is MSSYLDDLRIDLAASPASGGSASIAVGSFNIPYEVTRRLKGVGADADTTLTSCASWTQLQKLYEQYGDEPIKKHFEADSERGQRYSVKVSLGSKDENFLFLDYSKSHINDEIKCALLRLAEERGIRQFVQSVFRGERVNTTENRPVLHIALRNRSNRPIYVDGKDVMPAVNKVLDQMRSFSEKVRTGEWKGHTGKAIRHVVNIGIGGSDLGPVMATEALKPFSQRDLSLHFVSNVDGTHIAEVLKSIDIEATLFIVASKTFTTQETITNALSARRALLDYLRSRGIDEKGSVAKHFVALSTNNQKVKEFGIDEENMFQFWDWVGGRYSMWSAIGLPIMISIGYENFVELLTGAHVIDEHFANAPPEQNVPLLLALVGVWYINFFGAVTHAILPYDQYLWRLPAYLQQLDMESNGKYVTRSGKTVSTLTGPIIFGEAGTNGQHAFYQLIHQGTNLIPCDFIGAIQSQNKIGDHHKIFMSNFFAQTEALMIGKSPSEVRRELEAAGERSAEKINALLPHKTFIGGRPSNTLLIKSLTPRALGAIIAMYEHKVLVQGAIWGIDSYDQWGVELGKVLAKSILPQLRPGMRVNNHDSSTNGLINMFNELSHL.

Glu411 acts as the Proton donor in catalysis. Catalysis depends on residues His442 and Lys571. Residues 605–607 (SHL) carry the Microbody targeting signal motif.

It belongs to the GPI family. As to quaternary structure, homodimer.

The protein resides in the glycosome. It catalyses the reaction alpha-D-glucose 6-phosphate = beta-D-fructose 6-phosphate. The protein operates within carbohydrate degradation; glycolysis; D-glyceraldehyde 3-phosphate and glycerone phosphate from D-glucose: step 2/4. This Trypanosoma brucei brucei protein is Glucose-6-phosphate isomerase, glycosomal (PGI).